Consider the following 432-residue polypeptide: Adenylosuccinate synthetase (432 aa).

Residues 13–19 and 41–43 each bind GTP; these read GDEGKGK and GHT. Asp-14 acts as the Proton acceptor in catalysis. 2 residues coordinate Mg(2+): Asp-14 and Gly-41. IMP is bound by residues 14-17, 39-42, Thr-130, Arg-144, Gln-225, Thr-240, and Arg-304; these read DEGK and NAGH. Catalysis depends on His-42, which acts as the Proton donor. Residue 300 to 306 participates in substrate binding; that stretch reads ATTGRSR. Residues Arg-306, 332 to 334, and 415 to 417 contribute to the GTP site; these read KLD and STG.

Belongs to the adenylosuccinate synthetase family. As to quaternary structure, homodimer. Mg(2+) is required as a cofactor.

The protein localises to the cytoplasm. It catalyses the reaction IMP + L-aspartate + GTP = N(6)-(1,2-dicarboxyethyl)-AMP + GDP + phosphate + 2 H(+). It participates in purine metabolism; AMP biosynthesis via de novo pathway; AMP from IMP: step 1/2. Functionally, plays an important role in the de novo pathway of purine nucleotide biosynthesis. Catalyzes the first committed step in the biosynthesis of AMP from IMP. The chain is Adenylosuccinate synthetase from Yersinia enterocolitica serotype O:8 / biotype 1B (strain NCTC 13174 / 8081).